Reading from the N-terminus, the 236-residue chain is uncharacterized protein (236 aa).

The 206-residue stretch at 3–208 (ILGLTGSIAT…PSYFFTLLCL (206 aa)) folds into the DPCK domain. 8-15 (GSIATGKS) provides a ligand contact to ATP. 2 positions are modified to phosphoserine: Ser82 and Ser86.

Belongs to the CoaE family.

It localises to the cytoplasm. This is an uncharacterized protein from Schizosaccharomyces pombe (strain 972 / ATCC 24843) (Fission yeast).